The sequence spans 930 residues: Translation initiation factor IF-2 (930 aa).

Disordered regions lie at residues 160-179 (EPVEAAVDTSAPTRFSFTDG) and 208-301 (AKRA…AAAP). Residues 208 to 227 (AKRAAEEAKRTQPRAEKPAD) show a composition bias toward basic and acidic residues. 2 stretches are compositionally biased toward basic residues: residues 263-272 (GHGHKKHHHG) and 288-301 (KRGAGKAVKKAAAP). The 170-residue stretch at 431-600 (TRAPVVTVMG…SLQAEVLELT (170 aa)) folds into the tr-type G domain. The G1 stretch occupies residues 440–447 (GHVDHGKT). 440 to 447 (GHVDHGKT) serves as a coordination point for GTP. Residues 465–469 (GITQH) are G2. The G3 stretch occupies residues 486–489 (DTPG). GTP contacts are provided by residues 486–490 (DTPGH) and 540–543 (NKCD). Residues 540-543 (NKCD) form a G4 region. The G5 stretch occupies residues 576 to 578 (SAH).

The protein belongs to the TRAFAC class translation factor GTPase superfamily. Classic translation factor GTPase family. IF-2 subfamily.

The protein localises to the cytoplasm. One of the essential components for the initiation of protein synthesis. Protects formylmethionyl-tRNA from spontaneous hydrolysis and promotes its binding to the 30S ribosomal subunits. Also involved in the hydrolysis of GTP during the formation of the 70S ribosomal complex. The sequence is that of Translation initiation factor IF-2 from Cellvibrio japonicus (strain Ueda107) (Pseudomonas fluorescens subsp. cellulosa).